The primary structure comprises 686 residues: Asparagine-rich protein (686 aa).

An N-terminal signal peptide occupies residues 1–18 (MKGTSALLLIGFFHATIS). Disordered stretches follow at residues 34–73 (KRGN…DKTA), 125–148 (SLTS…SSSI), and 201–236 (ITRQ…QPPN). Residues 37–49 (NLNTGGQITSNSA) show a composition bias toward polar residues. Positions 62-73 (EPPKRRNTDKTA) are enriched in basic and acidic residues.

Prismatic layer of shell (at protein level). Expressed primarily in the mantle with highest level in the mantle edge and lower level in the mantle pallium.

The protein resides in the secreted. This Margaritifera margaritifera (Freshwater pearl mussel) protein is Asparagine-rich protein.